Reading from the N-terminus, the 241-residue chain is Isoprenyl transferase (241 aa).

Aspartate 17 is a catalytic residue. Residue aspartate 17 participates in Mg(2+) binding. Substrate-binding positions include 18-21 (GNGR), tryptophan 22, arginine 30, histidine 34, and 62-64 (STE). Residue asparagine 65 is the Proton acceptor of the active site. Residues tryptophan 66, arginine 68, arginine 186, and 192–194 (RLS) contribute to the substrate site. Glutamate 205 lines the Mg(2+) pocket.

Belongs to the UPP synthase family. Homodimer. It depends on Mg(2+) as a cofactor.

Its function is as follows. Catalyzes the condensation of isopentenyl diphosphate (IPP) with allylic pyrophosphates generating different type of terpenoids. In Leptospira interrogans serogroup Icterohaemorrhagiae serovar copenhageni (strain Fiocruz L1-130), this protein is Isoprenyl transferase.